A 190-amino-acid chain; its full sequence is Putative manganese efflux pump MntP (190 aa).

A run of 5 helical transmembrane segments spans residues 37–57 (LILAGIFGVFQALMPVIGWGI), 64–84 (LSFIRAIDHWVAFLLLAGVGA), 111–131 (LILGLATSIDALAVGMGMAFV), 135–155 (IITLALAMGLTTFVLSLVGAW), and 164–184 (FGGWATVIGGLVLIGLGGNIL).

The protein belongs to the MntP (TC 9.B.29) family.

The protein resides in the cell membrane. Functionally, probably functions as a manganese efflux pump. The polypeptide is Putative manganese efflux pump MntP (Corynebacterium efficiens (strain DSM 44549 / YS-314 / AJ 12310 / JCM 11189 / NBRC 100395)).